Consider the following 155-residue polypeptide: 6,7-dimethyl-8-ribityllumazine synthase (155 aa).

Residues Phe-24, Ala-58–Glu-60, and Val-82–Ile-84 contribute to the 5-amino-6-(D-ribitylamino)uracil site. Ser-87 to Thr-88 lines the (2S)-2-hydroxy-3-oxobutyl phosphate pocket. His-90 serves as the catalytic Proton donor. Residue Phe-115 participates in 5-amino-6-(D-ribitylamino)uracil binding. Arg-129 is a (2S)-2-hydroxy-3-oxobutyl phosphate binding site.

The protein belongs to the DMRL synthase family.

The catalysed reaction is (2S)-2-hydroxy-3-oxobutyl phosphate + 5-amino-6-(D-ribitylamino)uracil = 6,7-dimethyl-8-(1-D-ribityl)lumazine + phosphate + 2 H2O + H(+). The protein operates within cofactor biosynthesis; riboflavin biosynthesis; riboflavin from 2-hydroxy-3-oxobutyl phosphate and 5-amino-6-(D-ribitylamino)uracil: step 1/2. Catalyzes the formation of 6,7-dimethyl-8-ribityllumazine by condensation of 5-amino-6-(D-ribitylamino)uracil with 3,4-dihydroxy-2-butanone 4-phosphate. This is the penultimate step in the biosynthesis of riboflavin. The chain is 6,7-dimethyl-8-ribityllumazine synthase from Chlorobium phaeobacteroides (strain DSM 266 / SMG 266 / 2430).